The primary structure comprises 148 residues: Protein NrdI (148 aa).

Belongs to the NrdI family.

In terms of biological role, probably involved in ribonucleotide reductase function. The sequence is that of Protein NrdI from Mycolicibacterium gilvum (strain PYR-GCK) (Mycobacterium gilvum (strain PYR-GCK)).